We begin with the raw amino-acid sequence, 165 residues long: Regulator of ribonuclease activity A (165 aa).

It belongs to the RraA family. Homotrimer. Binds to both RNA-binding sites in the C-terminal region of Rne and to RhlB.

It is found in the cytoplasm. Functionally, globally modulates RNA abundance by binding to RNase E (Rne) and regulating its endonucleolytic activity. Can modulate Rne action in a substrate-dependent manner by altering the composition of the degradosome. Modulates RNA-binding and helicase activities of the degradosome. The polypeptide is Regulator of ribonuclease activity A (Pseudoalteromonas translucida (strain TAC 125)).